Consider the following 525-residue polypeptide: Ankyrin repeat domain-containing protein SOWAHC (525 aa).

The tract at residues 84–263 is disordered; that stretch reads CEGPSEPSGD…EESSGGGSVT (180 aa). At S88 the chain carries Phosphoserine. Low complexity predominate over residues 101–112; the sequence is AEPEAPDGPAGP. 3 positions are modified to phosphoserine: S126, S213, and S226. Positions 230–241 are enriched in gly residues; sequence SSGGGRGRGGGD. The span at 242 to 251 shows a compositional bias: low complexity; that stretch reads SDSASVASSS. ANK repeat units lie at residues 301 to 330 and 340 to 370; these read TGFTCLHWAAKHGRQELLAMLVNFANKHQL and GGYTALHLAAMHGHVEVVKLLVGAYDADVDI. The segment at 434–525 is disordered; the sequence is DGGDHHHHHH…TLRPKSNVFG (92 aa). Residues 468–477 show a composition bias toward basic residues; it reads IKPRLNKIRF. The segment covering 489–509 has biased composition (basic and acidic residues); the sequence is RDPEQPLEGRGEEGVGEERPV.

This sequence belongs to the SOWAH family.

The polypeptide is Ankyrin repeat domain-containing protein SOWAHC (SOWAHC) (Homo sapiens (Human)).